A 311-amino-acid polypeptide reads, in one-letter code: Aspartate carbamoyltransferase catalytic subunit (311 aa).

2 residues coordinate carbamoyl phosphate: Arg55 and Thr56. Position 85 (Lys85) interacts with L-aspartate. Carbamoyl phosphate contacts are provided by Arg106, His134, and Gln137. Positions 167 and 228 each coordinate L-aspartate. Residues Leu266 and Pro267 each coordinate carbamoyl phosphate.

It belongs to the aspartate/ornithine carbamoyltransferase superfamily. ATCase family. Heterododecamer (2C3:3R2) of six catalytic PyrB chains organized as two trimers (C3), and six regulatory PyrI chains organized as three dimers (R2).

It carries out the reaction carbamoyl phosphate + L-aspartate = N-carbamoyl-L-aspartate + phosphate + H(+). The protein operates within pyrimidine metabolism; UMP biosynthesis via de novo pathway; (S)-dihydroorotate from bicarbonate: step 2/3. Catalyzes the condensation of carbamoyl phosphate and aspartate to form carbamoyl aspartate and inorganic phosphate, the committed step in the de novo pyrimidine nucleotide biosynthesis pathway. The chain is Aspartate carbamoyltransferase catalytic subunit from Psychromonas ingrahamii (strain DSM 17664 / CCUG 51855 / 37).